The chain runs to 155 residues: 3-hydroxyacyl-[acyl-carrier-protein] dehydratase FabZ (155 aa).

Residue H58 is part of the active site.

This sequence belongs to the thioester dehydratase family. FabZ subfamily.

The protein resides in the cytoplasm. It catalyses the reaction a (3R)-hydroxyacyl-[ACP] = a (2E)-enoyl-[ACP] + H2O. Its function is as follows. Involved in unsaturated fatty acids biosynthesis. Catalyzes the dehydration of short chain beta-hydroxyacyl-ACPs and long chain saturated and unsaturated beta-hydroxyacyl-ACPs. The polypeptide is 3-hydroxyacyl-[acyl-carrier-protein] dehydratase FabZ (Rhizobium leguminosarum bv. trifolii (strain WSM2304)).